Reading from the N-terminus, the 921-residue chain is Short transient receptor potential channel 3 (921 aa).

Residues 1-73 (MSTKVRKCKE…PPFSHGPDLS (73 aa)) form a disordered region. Residues 1 to 459 (MSTKVRKCKE…KILRSPFMKF (459 aa)) lie on the Cytoplasmic side of the membrane. The segment covering 19-31 (PEEEEDEGEDEGA) has biased composition (acidic residues). ANK repeat units lie at residues 111 to 140 (AEEE…TLNV), 146 to 175 (MGQN…LARI), 177 to 203 (DALL…FAAS), and 232 to 261 (PDIT…RIER). Position 158 (Glu-158) interacts with Ca(2+). Residues 460 to 477 (VAHAASFIIFLGLLVFNA) form a helical membrane-spanning segment. Residues 478-508 (SDRFEGITTLPNITVTDYPKQIFRVKTTQFT) lie on the Extracellular side of the membrane. N-linked (GlcNAc...) asparagine glycosylation occurs at Asn-489. A helical transmembrane segment spans residues 509–527 (WTEMLIMVWVLGMMWSECK). Ca(2+) is bound by residues Glu-525, Glu-528, and Asn-543. Residues 528-540 (ELWLEGPREYILQ) are Cytoplasmic-facing. The helical transmembrane segment at 541–562 (LWNVLDFGMLSIFIAAFTARFL) threads the bilayer. Topologically, residues 563 to 606 (AFLQATKAQQYVDSYVQESDLSEVTLPPEIQYFTYARDKWLPSD) are extracellular. Residues 607–630 (PQIISEGLYAIAVVLSFSRIAYIL) traverse the membrane as a helical segment. Topologically, residues 631 to 649 (PANESFGPLQISLGRTVKD) are cytoplasmic. One copy of the ANK 5 repeat lies at 634–663 (ESFGPLQISLGRTVKDIFKFMVLFIMVFFA). Residues 650–673 (IFKFMVLFIMVFFAFMIGMFILYS) form a helical membrane-spanning segment. Residues 674–713 (YYLGAKVNAAFTTVEESFKTLFWSIFGLSEVTSVVLKYDH) are Extracellular-facing. Residues 714–739 (KFIENIGYVLYGIYNVTMVVVLLNML) form a helical membrane-spanning segment. Over 740 to 921 (IAMINSSYQE…KLNPSMLRCE (182 aa)) the chain is Cytoplasmic. The segment at 850–870 (QIMKRLIKRYVLKAQVDKEND) is binds to IP3R3. Ca(2+) is bound by residues Glu-871, Glu-874, Glu-876, and Asp-883.

Belongs to the transient receptor (TC 1.A.4) family. STrpC subfamily. TRPC3 sub-subfamily. In terms of assembly, homotetramer. Interacts with ITPR1. Interacts with ITPR3. Interacts with MX1. Interacts with RNF24. Interacts with JPH2; the interaction is involved in maintaining Ca(2+) homeostasis in skeletal muscle and is mediated by JPH2 'Ser-165' phosphorylation. As to quaternary structure, interacts with isoform short of TRPC1. As to expression, expressed predominantly in brain and at much lower levels in ovary, colon, small intestine, lung, prostate, placenta and testis.

It is found in the cell membrane. The catalysed reaction is Ca(2+)(in) = Ca(2+)(out). With respect to regulation, activated by diacylglycerol (DAG) in a membrane-delimited fashion, independently of protein kinase C. Activated by inositol 1,4,5-triphosphate receptors (ITPR) with bound IP3. May be activated by internal calcium store depletion. Inhibited by intracellular Ca(2+). In terms of biological role, forms a receptor-activated non-selective calcium permeant cation channel. Functionally, forms a receptor-activated non-selective calcium permeant cation channel. May be operated by a phosphatidylinositol second messenger system activated by receptor tyrosine kinases or G-protein coupled receptors. The protein is Short transient receptor potential channel 3 (TRPC3) of Homo sapiens (Human).